The chain runs to 736 residues: Catalase-peroxidase (736 aa).

A cross-link (tryptophyl-tyrosyl-methioninium (Trp-Tyr) (with M-250)) is located at residues 96–224 (WHSAGTYRTG…LAAVQMGLIY (129 aa)). The Proton acceptor role is filled by histidine 97. The segment at residues 224 to 250 (YVNPEGPDGNPDPVASGRDVRETFGRM) is a cross-link (tryptophyl-tyrosyl-methioninium (Tyr-Met) (with W-96)). A heme b-binding site is contributed by histidine 265.

This sequence belongs to the peroxidase family. Peroxidase/catalase subfamily. Homodimer or homotetramer. Heme b is required as a cofactor. Post-translationally, formation of the three residue Trp-Tyr-Met cross-link is important for the catalase, but not the peroxidase activity of the enzyme.

It catalyses the reaction H2O2 + AH2 = A + 2 H2O. The enzyme catalyses 2 H2O2 = O2 + 2 H2O. Bifunctional enzyme with both catalase and broad-spectrum peroxidase activity. This chain is Catalase-peroxidase, found in Pelobacter propionicus (strain DSM 2379 / NBRC 103807 / OttBd1).